Reading from the N-terminus, the 609-residue chain is Arginine--tRNA ligase (609 aa).

The 'HIGH' region signature appears at 132–142 (ANPTSSLHVGH).

Belongs to the class-I aminoacyl-tRNA synthetase family. Monomer.

It is found in the cytoplasm. The enzyme catalyses tRNA(Arg) + L-arginine + ATP = L-arginyl-tRNA(Arg) + AMP + diphosphate. This chain is Arginine--tRNA ligase, found in Psychrobacter arcticus (strain DSM 17307 / VKM B-2377 / 273-4).